We begin with the raw amino-acid sequence, 612 residues long: MDLPGNSSPFTQPSLCRQPLSRASWEARSPKRPRLQPLGTPSSLEKASRRVLAVVLEDVMTTNRVPLTHKEDTPSPLTHNHHQDPVCTQSPALPSQQVKWSMQARPPDPLHLCREPLTRARQSSPALRMRSRAASGPEESPSKKTDQVPQPTLVVVLEDIASGRQPAEGFDEDQPNLIVPAQSTFRSLKGPGKHCHRRGLDLEARPTLTLSLHPRAEPVTKAGQPMPTPSDLEPPFQLSTLPADPPESPVPDPALETPVIPTSSSLLRPRLSPWGLAPLFRSVRSKLESFADIFFTPNKTPQPPPPSPPMKLELKIAISEAEQSRATEKITSVSPRPPIRQWRTQCNSLAPVSKSSLGRSYSCPDLGPPDPGSWPPVPSQPSQSRPRRHTVGCGEMARTPPPPRPCLRKEVFPLGGVGVSPSLTTSCSANAPASFFCEPAEPRLGSTKGKELRASKDKVFSDPETKTMGKVSRFRIRRTPVRLQPNLTPMGLPRPIRLNKKEFTLEEIYTNKNYQSPTTRRTFETIFEEPRERNGTLIFTSSRKLRRAVEFRDSSLPRSRRPSRGVRTAASRTLTPNLAPSQDVGSLLQERLRELDALLLEEETDKEHPCHL.

M1 carries the post-translational modification N-acetylmethionine. 2 stretches are compositionally biased toward polar residues: residues 1–15 (MDLP…QPSL) and 86–96 (VCTQSPALPSQ). Disordered regions lie at residues 1–48 (MDLP…EKAS), 65–96 (VPLT…LPSQ), 119–150 (RARQ…QVPQ), and 206–256 (PTLT…PALE). The tract at residues 1-135 (MDLPGNSSPF…ALRMRSRAAS (135 aa)) is sufficient for heterochromatin association in interphase and chromatin association in anaphase. Positions 85-405 (PVCTQSPALP…MARTPPPPRP (321 aa)) are required for the interaction with GRB2 and sufficient to promote the phosphorylation of AKT and cell proliferation. Residues 136 to 392 (GPEESPSKKT…QSRPRRHTVG (257 aa)) are required for nuclear lamina association. The span at 243–252 (ADPPESPVPD) shows a compositional bias: pro residues. S307 bears the Phosphoserine mark. Disordered regions lie at residues 323–405 (QSRA…PPRP), 444–463 (LGST…FSDP), and 553–583 (DSSL…PSQD). The segment covering 342 to 359 (WRTQCNSLAPVSKSSLGR) has biased composition (polar residues). Positions 366 to 379 (LGPPDPGSWPPVPS) are enriched in pro residues. Over residues 448 to 463 (KGKELRASKDKVFSDP) the composition is skewed to basic and acidic residues. A required for nuclear localization region spans residues 546–563 (RRAVEFRDSSLPRSRRPS). Polar residues predominate over residues 570 to 583 (ASRTLTPNLAPSQD).

Interacts (via proline-rich region) with GRB2 (via SH3 domain 2). Interacts (via N-terminus) with CBX5.

The protein localises to the chromosome. It is found in the nucleus. The protein resides in the nucleus lamina. It localises to the nucleoplasm. Functionally, functions in tethering peripheral heterochromatin to the nuclear lamina during interphase, possibly through the interaction with heterochromatin protein CBX5/HP1 alpha. Might play a role in reattaching heterochromatin to the nuclear lamina at mitotic exit. Promotes myoblast differentiation during skeletal myogenesis, possibly by stimulating transcription factor MyoD activity via binding to CBX5/HP1 alpha. Involved in the positive regulation of the PI3K-Akt-mTOR signaling pathway and in promoting cell proliferation, possibly via binding to GRB2. This is Proline-rich protein 14 (Prr14) from Mus musculus (Mouse).